Consider the following 239-residue polypeptide: L-cystine transport system permease protein TcyL (239 aa).

One can recognise an ABC transmembrane type-1 domain in the interval 21 to 216 (LPVTLYILTL…AVAVLFEWFF (196 aa)). 4 helical membrane-spanning segments follow: residues 25–45 (LYIL…LALP), 69–89 (IMVQ…LIGI), 96–116 (PFYA…AEII), and 196–216 (EVYI…EWFF).

The protein belongs to the binding-protein-dependent transport system permease family. The complex is composed of two ATP-binding proteins (TcyN), two transmembrane proteins (TcyL and TcyM) and two solute-binding proteins (TcyJ and TcyK).

The protein localises to the cell membrane. Part of the ABC transporter complex TcyJKLMN involved in L-cystine import. Probably responsible for the translocation of the substrate across the membrane. Is also involved in cystathionine, djenkolate, and S-methylcysteine transport. This Bacillus subtilis (strain 168) protein is L-cystine transport system permease protein TcyL (tcyL).